The chain runs to 739 residues: Nucleoprotein (739 aa).

Residues 334-363 (VNVGEQYQQLREAATEAEKQLQQYAESREL) are a coiled coil. Disordered stretches follow at residues 414-475 (RPNL…YHDD) and 498-642 (FELQ…IGQS). Positions 570-579 (TPIDQGDDDP) are enriched in acidic residues. Basic and acidic residues predominate over residues 614-624 (AEAHEPPHKSS). A compositionally biased stretch (polar residues) spans 625–634 (NEPAETSQLN).

The protein belongs to the filoviruses nucleoprotein family. As to quaternary structure, homooligomer. Homomultimerizes to form the nucleocapsid. Binds to viral genomic RNA. Interacts with VP35 and VP30 to form the nucleocapsid. Interacts with host PPP2R5C; this interaction leads to VP30 dephosphorylation and viral transcription. Interacts with VP24; this interaction facilitates nucleocapsid assembly and genome packaging. Interacts with matrix protein VP40; this interaction allows recruitment of the nucleocapsid into progeny virions. Interacts with host STAU1. Interacts with host NXF1 (via RNA-binding domain); this interaction recruits NXF1 to the inclusion bodies were viral replication takes place, probably to export viral mRNA-NXF1 complexes from these sites. Interacts with host CCDC92; this interaction sequesters NP in the host cytoplasm. Interacts with host TRIM14. In terms of processing, phosphorylated and O-glycosylated by host. Acetylated by host EP300 in vitro.

Its subcellular location is the virion. It is found in the host cytoplasm. In terms of biological role, oligomerizes into helical capsid to encapsidate the viral genome, protecting it from nucleases and the cellular innate immune response. VP35 binds to and stabilizes monomeric NP, keeping it soluble. Upon virus replication, NP is recruited to bind cooperatively viral genomic RNA and VP35 is released. The encapsidated genomic RNA is termed the nucleocapsid and serves as template for transcription and replication. The nucleocapsid is helical with a pitch of 10.81 NP per turn and a diameter of about 22nm. Each NP binds to six nucleotides of viral genomic RNA, three being exposed to the solvant and three hidden into the nucleocapsid. Also recruits host PPP2R5C phosphatase to dephosphorylate VP30 and thereby promote viral transcription. Upon virion assembly and budding, NP binds to VP24 and possibly host STAU1. In Homo sapiens (Human), this protein is Nucleoprotein (NP).